A 206-amino-acid chain; its full sequence is Ribosomal RNA large subunit methyltransferase E (206 aa).

S-adenosyl-L-methionine contacts are provided by G60, W62, D80, D96, and D121. K161 acts as the Proton acceptor in catalysis.

This sequence belongs to the class I-like SAM-binding methyltransferase superfamily. RNA methyltransferase RlmE family.

The protein localises to the cytoplasm. It carries out the reaction uridine(2552) in 23S rRNA + S-adenosyl-L-methionine = 2'-O-methyluridine(2552) in 23S rRNA + S-adenosyl-L-homocysteine + H(+). Functionally, specifically methylates the uridine in position 2552 of 23S rRNA at the 2'-O position of the ribose in the fully assembled 50S ribosomal subunit. In Francisella tularensis subsp. tularensis (strain FSC 198), this protein is Ribosomal RNA large subunit methyltransferase E.